The sequence spans 450 residues: Phosphoglucosamine mutase (450 aa).

The active-site Phosphoserine intermediate is the Ser101. Mg(2+)-binding residues include Ser101, Asp242, Asp244, and Asp246. Phosphoserine is present on Ser101.

The protein belongs to the phosphohexose mutase family. Mg(2+) is required as a cofactor. In terms of processing, activated by phosphorylation.

It catalyses the reaction alpha-D-glucosamine 1-phosphate = D-glucosamine 6-phosphate. Functionally, catalyzes the conversion of glucosamine-6-phosphate to glucosamine-1-phosphate. This chain is Phosphoglucosamine mutase, found in Rhodopseudomonas palustris (strain TIE-1).